The sequence spans 276 residues: Undecaprenyl-diphosphatase 1 (276 aa).

8 helical membrane-spanning segments follow: residues 1–21, 44–64, 87–107, 114–134, 150–170, 190–210, 222–242, and 251–271; these read MSLWFLVFLSVLQGVTELFPV, QLLPFLVALHLGTALALLWYF, GHLMWALIIGTIPTGLVGLLL, VFHDLRIVAAALIINGVLLWL, LTFKQAFFVGLAQVGALIPGF, AAEFSFLLGTPIIFAAGLLEL, DALLGGVLTAIAAYLSVRFLM, and LASFGLYCVLAGLFCLGWFMF.

This sequence belongs to the UppP family.

It localises to the cell inner membrane. The catalysed reaction is di-trans,octa-cis-undecaprenyl diphosphate + H2O = di-trans,octa-cis-undecaprenyl phosphate + phosphate + H(+). Functionally, catalyzes the dephosphorylation of undecaprenyl diphosphate (UPP). Confers resistance to bacitracin. This chain is Undecaprenyl-diphosphatase 1, found in Burkholderia pseudomallei (strain 1106a).